Reading from the N-terminus, the 238-residue chain is Hydroxyacylglutathione hydrolase (238 aa).

His52, His54, Asp56, His57, His108, Asp125, and His163 together coordinate Zn(2+).

This sequence belongs to the metallo-beta-lactamase superfamily. Glyoxalase II family. As to quaternary structure, monomer. The cofactor is Zn(2+).

It catalyses the reaction an S-(2-hydroxyacyl)glutathione + H2O = a 2-hydroxy carboxylate + glutathione + H(+). Its pathway is secondary metabolite metabolism; methylglyoxal degradation; (R)-lactate from methylglyoxal: step 2/2. In terms of biological role, thiolesterase that catalyzes the hydrolysis of S-D-lactoyl-glutathione to form glutathione and D-lactic acid. The sequence is that of Hydroxyacylglutathione hydrolase from Haemophilus influenzae (strain ATCC 51907 / DSM 11121 / KW20 / Rd).